A 305-amino-acid polypeptide reads, in one-letter code: Virulence plasmid integrase pGP7-D (305 aa).

The Core-binding (CB) domain maps to 13–99 (LTFGDASEIW…CYISFTKFLY (87 aa)). A Tyr recombinase domain is found at 127–305 (IKTESISKQE…SPLVQTPPIL (179 aa)). Catalysis depends on residues lysine 188 and arginine 257. The O-(3'-phospho-DNA)-tyrosine intermediate role is filled by tyrosine 289.

It belongs to the 'phage' integrase family.

This is Virulence plasmid integrase pGP7-D from Chlamydia trachomatis serovar L2 (strain ATCC VR-902B / DSM 19102 / 434/Bu).